The sequence spans 271 residues: Formamidopyrimidine-DNA glycosylase (271 aa).

Pro2 (schiff-base intermediate with DNA) is an active-site residue. The active-site Proton donor is the Glu3. The Proton donor; for beta-elimination activity role is filled by Lys58. His92, Arg111, and Lys152 together coordinate DNA. The FPG-type zinc-finger motif lies at 237 to 271 (YVYGKVQKPCKICNNIITLIRQNGRSTYFCNACQN). Arg261 functions as the Proton donor; for delta-elimination activity in the catalytic mechanism.

The protein belongs to the FPG family. In terms of assembly, monomer. Zn(2+) serves as cofactor.

It catalyses the reaction Hydrolysis of DNA containing ring-opened 7-methylguanine residues, releasing 2,6-diamino-4-hydroxy-5-(N-methyl)formamidopyrimidine.. It carries out the reaction 2'-deoxyribonucleotide-(2'-deoxyribose 5'-phosphate)-2'-deoxyribonucleotide-DNA = a 3'-end 2'-deoxyribonucleotide-(2,3-dehydro-2,3-deoxyribose 5'-phosphate)-DNA + a 5'-end 5'-phospho-2'-deoxyribonucleoside-DNA + H(+). In terms of biological role, involved in base excision repair of DNA damaged by oxidation or by mutagenic agents. Acts as a DNA glycosylase that recognizes and removes damaged bases. Has a preference for oxidized purines, such as 7,8-dihydro-8-oxoguanine (8-oxoG). Has AP (apurinic/apyrimidinic) lyase activity and introduces nicks in the DNA strand. Cleaves the DNA backbone by beta-delta elimination to generate a single-strand break at the site of the removed base with both 3'- and 5'-phosphates. This Wolbachia sp. subsp. Drosophila simulans (strain wRi) protein is Formamidopyrimidine-DNA glycosylase.